The following is a 614-amino-acid chain: uncharacterized protein (614 aa).

4 helical membrane-spanning segments follow: residues 41–61 (GWIFLLAILTVGTGVMEAVLF), 87–107 (LIGMAALLLISIVWGFLASAV), 157–177 (DTVLTLANMFVYVLVYFITSG), and 178–198 (VVLVALDSWFLLPFITWIILF). Residues 43 to 330 (IFLLAILTVG…IMWESARLFE (288 aa)) form the ABC transmembrane type-1 domain. An ABC transporter domain is found at 364 to 603 (IKFNDITFAY…NGLYAKLWNH (240 aa)). 397 to 404 (GRSGAGKS) contributes to the ATP binding site.

It belongs to the ABC transporter superfamily.

It is found in the cell membrane. This is an uncharacterized protein from Haemophilus influenzae (strain ATCC 51907 / DSM 11121 / KW20 / Rd).